Here is a 167-residue protein sequence, read N- to C-terminus: Protein-export protein SecB (167 aa).

This sequence belongs to the SecB family. As to quaternary structure, homotetramer, a dimer of dimers. One homotetramer interacts with 1 SecA dimer.

It localises to the cytoplasm. Its function is as follows. One of the proteins required for the normal export of preproteins out of the cell cytoplasm. It is a molecular chaperone that binds to a subset of precursor proteins, maintaining them in a translocation-competent state. It also specifically binds to its receptor SecA. The sequence is that of Protein-export protein SecB from Wolbachia pipientis wMel.